Here is a 402-residue protein sequence, read N- to C-terminus: MSMEEISSCESFLTSSKPYFAMISLQFGYAGMNIITKISLNTGMSHYVLVVYRHAIATAVIAPFAFFFERKAQPKITFSIFMQLFILGLLGPVIDQNFYYMGLKYTSPTFSCAMSNMLPAMTFILAVLFRMEMLDLKKLWCQAKIAGTVVTVAGAMLMTIYKGPIVELFWTKYMHIQDSSHANTTSSKNSSSDKEFLKGSILLIFATLAWASLFVLQAKILKTYAKHQLSLTTLICFIGTLQAVAVTFVMEHNPSAWRIGWDMNLLAAAYSGIVASSISYYVQGIVMKKRGPVFATAFSPLMMVIVAVMGSFVLAEKIFLGGVIGAVLIVIGLYAVLWGKQKENQVTICELAKIDSNSKVTEDVEANGSKMKISEGDNSMLSTIVISVPLSETHLKKTIQEP.

10 helical membrane-spanning segments follow: residues 20-40, 48-68, 74-94, 109-129, 149-169, 196-216, 229-249, 266-286, 293-313, and 318-338; these read FAMI…KISL, VLVV…AFFF, PKIT…GPVI, TFSC…AVLF, VVTV…VELF, FLKG…LFVL, LSLT…VTFV, LAAA…QGIV, VFAT…GSFV, and IFLG…AVLW. EamA domains are found at residues 29-159 and 208-337; these read YAGM…MLMT and LAWA…YAVL.

Belongs to the drug/metabolite transporter (DMT) superfamily. Plant drug/metabolite exporter (P-DME) (TC 2.A.7.4) family.

The protein localises to the membrane. The sequence is that of WAT1-related protein At5g07050 from Arabidopsis thaliana (Mouse-ear cress).